The sequence spans 159 residues: Protein-export protein SecB (159 aa).

It belongs to the SecB family. As to quaternary structure, homotetramer, a dimer of dimers. One homotetramer interacts with 1 SecA dimer.

The protein localises to the cytoplasm. In terms of biological role, one of the proteins required for the normal export of preproteins out of the cell cytoplasm. It is a molecular chaperone that binds to a subset of precursor proteins, maintaining them in a translocation-competent state. It also specifically binds to its receptor SecA. This is Protein-export protein SecB from Rhizobium etli (strain CIAT 652).